A 111-amino-acid chain; its full sequence is Nucleoid-associated protein PFL_1905 (111 aa).

Disordered stretches follow at residues 1-20 and 88-111; these read MKGG…EKMA and SNSQ…KLPF.

The protein belongs to the YbaB/EbfC family. As to quaternary structure, homodimer.

The protein localises to the cytoplasm. The protein resides in the nucleoid. Its function is as follows. Binds to DNA and alters its conformation. May be involved in regulation of gene expression, nucleoid organization and DNA protection. This Pseudomonas fluorescens (strain ATCC BAA-477 / NRRL B-23932 / Pf-5) protein is Nucleoid-associated protein PFL_1905.